Reading from the N-terminus, the 150-residue chain is D-aminoacyl-tRNA deacylase (150 aa).

The Gly-cisPro motif, important for rejection of L-amino acids motif lies at 138–139 (GP).

It belongs to the DTD family. Homodimer.

Its subcellular location is the cytoplasm. The catalysed reaction is glycyl-tRNA(Ala) + H2O = tRNA(Ala) + glycine + H(+). The enzyme catalyses a D-aminoacyl-tRNA + H2O = a tRNA + a D-alpha-amino acid + H(+). In terms of biological role, an aminoacyl-tRNA editing enzyme that deacylates mischarged D-aminoacyl-tRNAs. Also deacylates mischarged glycyl-tRNA(Ala), protecting cells against glycine mischarging by AlaRS. Acts via tRNA-based rather than protein-based catalysis; rejects L-amino acids rather than detecting D-amino acids in the active site. By recycling D-aminoacyl-tRNA to D-amino acids and free tRNA molecules, this enzyme counteracts the toxicity associated with the formation of D-aminoacyl-tRNA entities in vivo and helps enforce protein L-homochirality. The polypeptide is D-aminoacyl-tRNA deacylase (Opitutus terrae (strain DSM 11246 / JCM 15787 / PB90-1)).